The chain runs to 293 residues: Putative ABC transporter ATP-binding protein AF_0731 (293 aa).

The 235-residue stretch at 2-236 folds into the ABC transporter domain; that stretch reads IEAVDLHFCY…RKLGIRSFSL (235 aa). Position 34–41 (34–41) interacts with ATP; that stretch reads GRNGAGKT.

This sequence belongs to the ABC transporter superfamily.

Its subcellular location is the cell membrane. In terms of biological role, probably part of an ABC transporter complex. Responsible for energy coupling to the transport system. The chain is Putative ABC transporter ATP-binding protein AF_0731 from Archaeoglobus fulgidus (strain ATCC 49558 / DSM 4304 / JCM 9628 / NBRC 100126 / VC-16).